Consider the following 472-residue polypeptide: NALCN channel auxiliary factor 2 (472 aa).

The chain crosses the membrane as a helical span at residues 47–67 (LASLLFFTVLLADHLWLCAGA). The segment at 77–114 (AMRPPWGAGRERQPVPPRAVLPLPPPPPGEPSAPPGTC) is disordered. Positions 90–110 (PVPPRAVLPLPPPPPGEPSAP) are enriched in pro residues. Residues Asn120 and Asn193 are each glycosylated (N-linked (GlcNAc...) asparagine). Residues 433–453 (LCVLVLMLLHTVVSFSSNQGG) form a helical membrane-spanning segment.

It belongs to the NALF family.

Its subcellular location is the membrane. Its function is as follows. Probable component of the NALCN channel complex, a channel that regulates the resting membrane potential and controls neuronal excitability. The polypeptide is NALCN channel auxiliary factor 2 (Homo sapiens (Human)).